The sequence spans 364 residues: Putative serine/threonine-protein phosphatase C06A1.3 (364 aa).

Residues 1–24 form a disordered region; the sequence is MSTDGNNNKKGSKEGPKSSEISKF. Over residues 11-24 the composition is skewed to basic and acidic residues; the sequence is GSKEGPKSSEISKF. Mn(2+) is bound by residues aspartate 93, histidine 95, aspartate 121, and asparagine 153. Histidine 154 serves as the catalytic Proton donor. Mn(2+) contacts are provided by histidine 202 and histidine 277.

This sequence belongs to the PPP phosphatase family. PP-1 subfamily. Mn(2+) serves as cofactor.

The catalysed reaction is O-phospho-L-seryl-[protein] + H2O = L-seryl-[protein] + phosphate. It catalyses the reaction O-phospho-L-threonyl-[protein] + H2O = L-threonyl-[protein] + phosphate. In Caenorhabditis elegans, this protein is Putative serine/threonine-protein phosphatase C06A1.3.